The following is a 570-amino-acid chain: Hydroxylamine reductase (570 aa).

[4Fe-4S] cluster-binding residues include Cys-5, Cys-8, Cys-17, and Cys-23. His-266, Glu-290, Cys-334, Cys-425, Cys-453, Cys-478, Glu-513, and Lys-515 together coordinate hybrid [4Fe-2O-2S] cluster. Cysteine persulfide is present on Cys-425.

This sequence belongs to the HCP family. Requires [4Fe-4S] cluster as cofactor. Hybrid [4Fe-2O-2S] cluster is required as a cofactor.

It is found in the cytoplasm. The enzyme catalyses A + NH4(+) + H2O = hydroxylamine + AH2 + H(+). Its function is as follows. Catalyzes the reduction of hydroxylamine to form NH(3) and H(2)O. The chain is Hydroxylamine reductase from Clostridium botulinum (strain 657 / Type Ba4).